The chain runs to 335 residues: Glyceraldehyde-3-phosphate dehydrogenase 2 (335 aa).

Residues 13–14 and glycine 111 contribute to the NAD(+) site; that span reads TI. Residue 140 to 142 coordinates D-glyceraldehyde 3-phosphate; it reads SCN. Catalysis depends on cysteine 141, which acts as the Nucleophile. Residue arginine 169 participates in NAD(+) binding. D-glyceraldehyde 3-phosphate-binding positions include threonine 171 and 195–196; that span reads HG. An NAD(+)-binding site is contributed by glutamine 300.

It belongs to the glyceraldehyde-3-phosphate dehydrogenase family. Homotetramer.

Its subcellular location is the cytoplasm. The catalysed reaction is D-glyceraldehyde 3-phosphate + phosphate + NADP(+) = (2R)-3-phospho-glyceroyl phosphate + NADPH + H(+). It carries out the reaction D-glyceraldehyde 3-phosphate + phosphate + NAD(+) = (2R)-3-phospho-glyceroyl phosphate + NADH + H(+). It participates in carbohydrate degradation; glycolysis; pyruvate from D-glyceraldehyde 3-phosphate: step 1/5. This is Glyceraldehyde-3-phosphate dehydrogenase 2 (gapB) from Methanosarcina acetivorans (strain ATCC 35395 / DSM 2834 / JCM 12185 / C2A).